A 310-amino-acid polypeptide reads, in one-letter code: Methionyl-tRNA formyltransferase (310 aa).

109–112 lines the (6S)-5,6,7,8-tetrahydrofolate pocket; the sequence is SLLP.

The protein belongs to the Fmt family.

The catalysed reaction is L-methionyl-tRNA(fMet) + (6R)-10-formyltetrahydrofolate = N-formyl-L-methionyl-tRNA(fMet) + (6S)-5,6,7,8-tetrahydrofolate + H(+). Attaches a formyl group to the free amino group of methionyl-tRNA(fMet). The formyl group appears to play a dual role in the initiator identity of N-formylmethionyl-tRNA by promoting its recognition by IF2 and preventing the misappropriation of this tRNA by the elongation apparatus. This Macrococcus caseolyticus (strain JCSC5402) (Macrococcoides caseolyticum) protein is Methionyl-tRNA formyltransferase.